The chain runs to 65 residues: Large ribosomal subunit protein bL35c (65 aa).

The tract at residues 18–50 (SSGKILRHKASKSHLLQKKSSKHRRHLSSTCQV) is disordered. Positions 22–44 (ILRHKASKSHLLQKKSSKHRRHL) are enriched in basic residues.

Belongs to the bacterial ribosomal protein bL35 family.

The protein resides in the plastid. Its subcellular location is the chloroplast. The chain is Large ribosomal subunit protein bL35c from Porphyra purpurea (Red seaweed).